A 313-amino-acid polypeptide reads, in one-letter code: Ribosomal RNA small subunit methyltransferase H (313 aa).

S-adenosyl-L-methionine is bound by residues 35-37, aspartate 55, phenylalanine 79, aspartate 100, and glutamine 107; that span reads GGH.

Belongs to the methyltransferase superfamily. RsmH family.

The protein localises to the cytoplasm. It catalyses the reaction cytidine(1402) in 16S rRNA + S-adenosyl-L-methionine = N(4)-methylcytidine(1402) in 16S rRNA + S-adenosyl-L-homocysteine + H(+). Its function is as follows. Specifically methylates the N4 position of cytidine in position 1402 (C1402) of 16S rRNA. The chain is Ribosomal RNA small subunit methyltransferase H from Burkholderia orbicola (strain MC0-3).